We begin with the raw amino-acid sequence, 944 residues long: Calcium-transporting ATPase type 2C member 2 (944 aa).

Topologically, residues 1-104 (MGRRFKFLQK…DNTEPVWKKY (104 aa)) are cytoplasmic. The interaction with ORAI1 stretch occupies residues 69–93 (VDLDSGLSEFAVAQRRLVHGWNEFV). Residues 105-125 (LDQFRNPLILLLLGSSVVSVL) traverse the membrane as a helical segment. At 126 to 127 (TK) the chain is on the extracellular side. A helical transmembrane segment spans residues 128 to 148 (EYEDAISIALAVLIVVTVGFI). At 149-229 (QEYRSEKSLE…EVEPCSKTDS (81 aa)) the chain is on the cytoplasmic side. The chain crosses the membrane as a helical span at residues 230 to 250 (PLAGGGDLSTLSNVVFMGTLV). Over 251 to 291 (QCGKGQGVVIGTGEQSQFGEVFKMMRAEETPKTPLQKSMDK) the chain is Extracellular. The residue at position 262 (Thr262) is a Phosphothreonine. A Phosphoserine modification is found at Ser266. A helical membrane pass occupies residues 292-312 (LGKQLTVFSFGIIGLLMLVGW). The Cytoplasmic portion of the chain corresponds to 313-329 (VQGKPLLSMFTIGVSLA). Ca(2+) contacts are provided by Val330, Ala331, Ile333, and Glu335. A helical membrane pass occupies residues 330 to 350 (VAAIPEGLPIVVMVTLVLGVL). The Extracellular portion of the chain corresponds to 351-748 (RMAKKRVIVK…IAALSLITLS (398 aa)). Asp377 acts as the 4-aspartylphosphate intermediate in catalysis. Asp672 and Asp676 together coordinate Mg(2+). The chain crosses the membrane as a helical span at residues 749–769 (TVCNLPNPLNAMQILWVNIIM). Residues Asn766 and Asp770 each contribute to the Ca(2+) site. The Cytoplasmic segment spans residues 770–802 (DGPPAQSLGVEPVDRDALKRPPRSVKDTILNRA). Residues 803 to 823 (LILKILMSAAVILGGTLFIFW) traverse the membrane as a helical segment. Topologically, residues 824 to 835 (REIPENRTSTPR) are extracellular. Residues 836 to 853 (TTTMAFTCFVFFDLFNAL) form a helical membrane-spanning segment. The Cytoplasmic segment spans residues 854 to 872 (SCRSQTKLIFEIGFFRNRM). A helical membrane pass occupies residues 873–893 (FLYSILGSLLGQLAVIYAPPL). The Extracellular portion of the chain corresponds to 894–903 (QKVFQTENLS). The helical transmembrane segment at 904 to 924 (ALDLLLLTGLASSVFILSELL) threads the bilayer. Topologically, residues 925-944 (KLCEKFCSRAKADQMLPEAV) are cytoplasmic.

Belongs to the cation transport ATPase (P-type) (TC 3.A.3) family. Type IIA subfamily. In terms of assembly, interacts (via N-terminus) with ORAI1 (via N- and C-termini); this interaction regulates Ca(2+) influx at the plasma membrane.

It localises to the golgi apparatus. The protein localises to the trans-Golgi network membrane. Its subcellular location is the cell membrane. The protein resides in the basolateral cell membrane. The catalysed reaction is Ca(2+)(in) + ATP + H2O = Ca(2+)(out) + ADP + phosphate + H(+). It carries out the reaction Mn(2+)(in) + ATP + H2O = Mn(2+)(out) + ADP + phosphate + H(+). In terms of biological role, ATP-driven pump that supplies the Golgi apparatus with Ca(2+) and Mn(2+) ions, both essential cofactors for processing and trafficking of newly synthesized proteins in the secretory pathway. Within a catalytic cycle, acquires Ca(2+) or Mn(2+) ions on the cytoplasmic side of the membrane and delivers them to the lumenal side. The transfer of ions across the membrane is coupled to ATP hydrolysis and is associated with a transient phosphorylation that shifts the pump conformation from inward-facing to outward-facing state. Induces Ca(2+) influx independently of its ATP-driven pump function. At the basolateral membrane of mammary epithelial cells, interacts with Ca(2+) channel ORAI1 and mediates Ca(2+) entry independently of the Ca(2+) content of endoplasmic reticulum or Golgi stores. May facilitate transepithelial transport of large quantities of Ca(2+) for milk secretion via activation of Ca(2+) influx channels at the plasma membrane and active Ca(2+) transport at the Golgi apparatus. This chain is Calcium-transporting ATPase type 2C member 2 (Atp2c2), found in Rattus norvegicus (Rat).